The following is a 250-amino-acid chain: Probable fimbrial chaperone YfcS (250 aa).

An N-terminal signal peptide occupies residues methionine 1–alanine 28.

This sequence belongs to the periplasmic pilus chaperone family.

The protein localises to the periplasm. Its function is as follows. Part of the yfcOPQRSUV fimbrial operon. Could contribute to adhesion to various surfaces in specific environmental niches. Increases adhesion to eukaryotic T24 bladder epithelial cells in the absence of fim genes. The sequence is that of Probable fimbrial chaperone YfcS (yfcS) from Escherichia coli (strain K12).